We begin with the raw amino-acid sequence, 576 residues long: Arginine--tRNA ligase (576 aa).

Positions 128-136 (PTGPMHIGH) match the 'HIGH' region motif.

Belongs to the class-I aminoacyl-tRNA synthetase family. As to quaternary structure, monomer.

It is found in the cytoplasm. It catalyses the reaction tRNA(Arg) + L-arginine + ATP = L-arginyl-tRNA(Arg) + AMP + diphosphate. The polypeptide is Arginine--tRNA ligase (Rickettsia conorii (strain ATCC VR-613 / Malish 7)).